A 3301-amino-acid polypeptide reads, in one-letter code: Cadherin EGF LAG seven-pass G-type receptor 3 (3301 aa).

The signal sequence occupies residues 1–31 (MARRPLWWGLPGPSTPVLLLLLLSLFPFSRE). Residues 32–2531 (ELGGGGDQDW…RLEGDLELLA (2500 aa)) lie on the Extracellular side of the membrane. Disordered stretches follow at residues 148 to 189 (LPLD…ARRS) and 202 to 314 (KLWE…NRHP). Residues 267 to 276 (MRSRGLFRRR) show a composition bias toward basic residues. Cadherin domains lie at 317–424 (PQYN…APVF), 425–536 (EQAQ…APQF), 537–642 (SEKR…APIF), 643–747 (VSTP…RPEF), 748–849 (TMKE…RPVF), 850–952 (QSAH…APQF), 953–1058 (VASH…APVF), 1059–1160 (PAEE…SPVL), and 1161–1257 (NNFQ…VVII). N-linked (GlcNAc...) asparagine glycosylation is present at Asn623. Asn838 carries N-linked (GlcNAc...) asparagine glycosylation. Residues Asn1173, Asn1213, Asn1308, and Asn1318 are each glycosylated (N-linked (GlcNAc...) asparagine). An EGF-like 1; calcium-binding domain is found at 1366–1424 (DDNVCLREPCENYMKCVSVLRFDSSAPFLASTSTLFRPIQPIAGLRCRCPPGFTGDFCE). 9 disulfide bridges follow: Cys1370–Cys1381, Cys1375–Cys1412, Cys1414–Cys1423, Cys1430–Cys1441, Cys1435–Cys1450, Cys1452–Cys1459, Cys1468–Cys1479, Cys1473–Cys1489, and Cys1491–Cys1502. The region spanning 1426 to 1460 (ELDLCYSNPCRNGGACARREGGYTCVCRPRFTDCE) is the EGF-like 2; calcium-binding domain. An EGF-like 3; calcium-binding domain is found at 1464-1503 (EAGRCVPGVCRNGGTCTNAPNGGFRCQCPAGGAFEGPRCE). Positions 1504-1708 (VAARSFPPSS…VANNGTMAGC (205 aa)) constitute a Laminin G-like 1 domain. Residues Asn1638 and Asn1702 are each glycosylated (N-linked (GlcNAc...) asparagine). Intrachain disulfides connect Cys1682/Cys1708, Cys1715/Cys1726, Cys1720/Cys1735, and Cys1737/Cys1746. Residues 1711–1747 (KSHFCASGPCKNNGFCSERWGGFSCDCPVGFGGKDCR) form the EGF-like 4; calcium-binding domain. One can recognise a Laminin G-like 2 domain in the interval 1751–1933 (AHPYHFQGNG…SHRVNVEPGC (183 aa)). N-linked (GlcNAc...) asparagine glycosylation occurs at Asn1759. 9 disulfides stabilise this stretch: Cys1904-Cys1933, Cys1939-Cys1950, Cys1944-Cys1959, Cys1961-Cys1970, Cys1974-Cys1985, Cys1979-Cys1997, Cys1999-Cys2008, Cys2016-Cys2029, and Cys2031-Cys2041. An EGF-like 5; calcium-binding domain is found at 1935–1971 (VTNPCASGPCPPHADCKDLWQTFSCTCRPGYYGPGCV). Asp1952 is subject to (3R)-3-hydroxyaspartate. The EGF-like 6; calcium-binding domain maps to 1972 to 2002 (DACLLNPCQNQGSCRHLQGAPHGYTCDCVSG). Residues 2003 to 2042 (YFGQHCEHRVDQQCPRGWWGSPTCGPCNCDVHKGFDPNCN) form the EGF-like 7; calcium-binding domain. N-linked (GlcNAc...) asparagine glycosylation is present at Asn2042. Residues 2044–2079 (TNGQCHCKEFHYRPRGSDSCLPCDCYPVGSTSRSCA) enclose the EGF-like 8; calcium-binding domain. Cystine bridges form between Cys2048/Cys2063, Cys2050/Cys2066, Cys2068/Cys2078, Cys2087/Cys2096, and Cys2099/Cys2111. The 48-residue stretch at 2066-2113 (CDCYPVGSTSRSCAPHSGQCPCRPGALGRQCNSCDSPFAEVTASGCRV) folds into the Laminin EGF-like domain. Tyr2115 carries the phosphotyrosine modification. Asn2166, Asn2185, Asn2375, Asn2465, and Asn2497 each carry an N-linked (GlcNAc...) asparagine glycan. Residues 2353-2388 (LLPSQASQPSPSEVLPTSSNAENATASSVVSPPAPL) form a disordered region. Residues 2355 to 2383 (PSQASQPSPSEVLPTSSNAENATASSVVS) show a composition bias toward low complexity. The GAIN-B domain maps to 2357-2521 (QASQPSPSEV…GVLMDASPRE (165 aa)). 2 disulfides stabilise this stretch: Cys2471/Cys2503 and Cys2491/Cys2505. The interval 2471-2521 (CVQWDPPGPTDQHGMWTARDCELVHRNGSHARCRCSRTGTFGVLMDASPRE) is GPS. The chain crosses the membrane as a helical span at residues 2532–2552 (VFTHVVVAVSVTALVLTAAVL). Residues 2553–2563 (LSLRSLKSNVR) lie on the Cytoplasmic side of the membrane. Residues 2564–2584 (GIHANVAAALGVAELLFLLGI) form a helical membrane-spanning segment. At 2585–2592 (HRTHNQLL) the chain is on the extracellular side. The chain crosses the membrane as a helical span at residues 2593-2613 (CTAVAILLHYFFLSTFAWLLV). Residues 2614–2634 (QGLHLYRMQVEPRNVDRGAMR) lie on the Cytoplasmic side of the membrane. Residues 2635 to 2655 (FYHALGWGVPAVLLGLAVGLD) form a helical membrane-spanning segment. At 2656–2673 (PEGYGNPDFCWISIHEPL) the chain is on the extracellular side. A helical transmembrane segment spans residues 2674–2694 (IWSFAGPIVLVIVMNGTMFLL). Residues 2695–2716 (AARTSCSTGQREAKKTSVLTLR) lie on the Cytoplasmic side of the membrane. The helical transmembrane segment at 2717 to 2737 (SSFLLLLLVSASWLFGLLAVN) threads the bilayer. The Extracellular segment spans residues 2738–2744 (HSILAFH). The chain crosses the membrane as a helical span at residues 2745–2765 (YLHAGLCGLQGLAVLLLFCVL). At 2766-3301 (NADARAAWTP…SEVPRSEGHS (536 aa)) the chain is on the cytoplasmic side. Disordered stretches follow at residues 2823-2844 (SSAR…YLRD), 2879-2919 (AGAD…RPLR), and 2969-2992 (SNKD…TSLG). Residues 2881–2891 (ADSDSDSDLSL) show a composition bias toward acidic residues. Positions 2910–2919 (TRGRFQRPLR) are enriched in basic residues. A Phosphotyrosine modification is found at Tyr3042. Residues 3083–3301 (APVLHPLSRP…SEVPRSEGHS (219 aa)) are disordered. Residue Ser3090 is modified to Phosphoserine. The span at 3094–3111 (SQERLDTAPARLEARDRG) shows a compositional bias: basic and acidic residues. Low complexity-rich tracts occupy residues 3168–3189 (SPQR…SLSR) and 3239–3261 (LSSI…STPS). Polar residues predominate over residues 3276–3289 (TPRSATSHSISELS).

Belongs to the G-protein coupled receptor 2 family. LN-TM7 subfamily. As to expression, expressed in the CNS and in the eye.

The protein resides in the cell membrane. Receptor that may have an important role in cell/cell signaling during nervous system formation. This is Cadherin EGF LAG seven-pass G-type receptor 3 (Celsr3) from Mus musculus (Mouse).